We begin with the raw amino-acid sequence, 236 residues long: Purine nucleoside phosphorylase DeoD-type 2 (236 aa).

H5 provides a ligand contact to a purine D-ribonucleoside. Residues G21, R25, R44, and 88–91 each bind phosphate; that span reads RVGS. A purine D-ribonucleoside is bound by residues 180–182 and 204–205; these read DME and SD. The Proton donor role is filled by D205.

This sequence belongs to the PNP/UDP phosphorylase family. In terms of assembly, homohexamer; trimer of homodimers.

It catalyses the reaction a purine D-ribonucleoside + phosphate = a purine nucleobase + alpha-D-ribose 1-phosphate. It carries out the reaction a purine 2'-deoxy-D-ribonucleoside + phosphate = a purine nucleobase + 2-deoxy-alpha-D-ribose 1-phosphate. Its function is as follows. Catalyzes the reversible phosphorolytic breakdown of the N-glycosidic bond in the beta-(deoxy)ribonucleoside molecules, with the formation of the corresponding free purine bases and pentose-1-phosphate. This chain is Purine nucleoside phosphorylase DeoD-type 2, found in Photobacterium profundum (strain SS9).